A 520-amino-acid chain; its full sequence is 2-isopropylmalate synthase (520 aa).

A Pyruvate carboxyltransferase domain is found at 12 to 274 (IRIFDTTLRD…DTAINTPRIV (263 aa)). Mn(2+) contacts are provided by Asp21, His209, His211, and Asn245. The interval 396-520 (RLASMTISDV…VVAGKTAAVA (125 aa)) is regulatory domain.

It belongs to the alpha-IPM synthase/homocitrate synthase family. LeuA type 1 subfamily. In terms of assembly, homodimer. It depends on Mn(2+) as a cofactor.

It is found in the cytoplasm. It carries out the reaction 3-methyl-2-oxobutanoate + acetyl-CoA + H2O = (2S)-2-isopropylmalate + CoA + H(+). The protein operates within amino-acid biosynthesis; L-leucine biosynthesis; L-leucine from 3-methyl-2-oxobutanoate: step 1/4. Its function is as follows. Catalyzes the condensation of the acetyl group of acetyl-CoA with 3-methyl-2-oxobutanoate (2-ketoisovalerate) to form 3-carboxy-3-hydroxy-4-methylpentanoate (2-isopropylmalate). The protein is 2-isopropylmalate synthase of Xanthomonas campestris pv. campestris (strain B100).